We begin with the raw amino-acid sequence, 215 residues long: NAD(P)H-quinone oxidoreductase subunit I (215 aa).

2 4Fe-4S ferredoxin-type domains span residues 55–84 (GRIH…VDWV) and 95–124 (RNYS…MTEE). [4Fe-4S] cluster is bound by residues Cys-64, Cys-67, Cys-70, Cys-74, Cys-104, Cys-107, Cys-110, and Cys-114. A disordered region spans residues 166-215 (AGEMDPHGVPNDRPRAGQLPSQVLETLAPPAKVGAKNEGQSTGTTQEGEA). Positions 169–180 (MDPHGVPNDRPR) are enriched in basic and acidic residues. Over residues 203–215 (EGQSTGTTQEGEA) the composition is skewed to polar residues.

This sequence belongs to the complex I 23 kDa subunit family. NDH-1 is composed of at least 11 different subunits. [4Fe-4S] cluster serves as cofactor.

The protein resides in the cellular thylakoid membrane. The enzyme catalyses a plastoquinone + NADH + (n+1) H(+)(in) = a plastoquinol + NAD(+) + n H(+)(out). It catalyses the reaction a plastoquinone + NADPH + (n+1) H(+)(in) = a plastoquinol + NADP(+) + n H(+)(out). In terms of biological role, NDH-1 shuttles electrons from an unknown electron donor, via FMN and iron-sulfur (Fe-S) centers, to quinones in the respiratory and/or the photosynthetic chain. The immediate electron acceptor for the enzyme in this species is believed to be plastoquinone. Couples the redox reaction to proton translocation, and thus conserves the redox energy in a proton gradient. This Parasynechococcus marenigrum (strain WH8102) protein is NAD(P)H-quinone oxidoreductase subunit I.